Reading from the N-terminus, the 172-residue chain is MDRAQKEKVVEELGQIFESSGVVVVAHYTGLTVSEMQDLRARARDAGGSVRVAKNRLAKIALEGKPCESMSDLLTGMTVLTYSEDPVAAAKVAEDFAKENKKFEILGGAMGENALDRAGVEAVSKMPSREELIASIVGCIGAPASNIAGAIGAPASNIASILSTIEEKAEAA.

The protein belongs to the universal ribosomal protein uL10 family. As to quaternary structure, part of the ribosomal stalk of the 50S ribosomal subunit. The N-terminus interacts with L11 and the large rRNA to form the base of the stalk. The C-terminus forms an elongated spine to which L12 dimers bind in a sequential fashion forming a multimeric L10(L12)X complex.

In terms of biological role, forms part of the ribosomal stalk, playing a central role in the interaction of the ribosome with GTP-bound translation factors. The sequence is that of Large ribosomal subunit protein uL10 from Ruegeria sp. (strain TM1040) (Silicibacter sp.).